We begin with the raw amino-acid sequence, 221 residues long: Succinate--CoA ligase [ADP-forming] subunit beta, mitochondrial (221 aa).

An ATP-grasp domain is found at 1 to 122 (DVVIKAQVLA…DSNSAYRQKI (122 aa)). Lys5 serves as a coordination point for ATP. An N6-acetyllysine mark is found at Lys22 and Lys26. Ser114 is modified (phosphoserine). Thr139 is subject to Phosphothreonine. 171 to 173 (GIM) is a substrate binding site. Lys196 is subject to N6-acetyllysine.

Belongs to the succinate/malate CoA ligase beta subunit family. ATP-specific subunit beta subfamily. In terms of assembly, heterodimer of an alpha and a beta subunit. The beta subunit determines specificity for ATP. Interacts with ALAS2.

The protein resides in the mitochondrion. The catalysed reaction is succinate + ATP + CoA = succinyl-CoA + ADP + phosphate. The protein operates within carbohydrate metabolism; tricarboxylic acid cycle; succinate from succinyl-CoA (ligase route): step 1/1. In terms of biological role, ATP-specific succinyl-CoA synthetase functions in the citric acid cycle (TCA), coupling the hydrolysis of succinyl-CoA to the synthesis of ATP and thus represents the only step of substrate-level phosphorylation in the TCA. The beta subunit provides nucleotide specificity of the enzyme and binds the substrate succinate, while the binding sites for coenzyme A and phosphate are found in the alpha subunit. The sequence is that of Succinate--CoA ligase [ADP-forming] subunit beta, mitochondrial from Mesocricetus auratus (Golden hamster).